We begin with the raw amino-acid sequence, 422 residues long: Glutamate-1-semialdehyde 2,1-aminomutase (422 aa).

An N6-(pyridoxal phosphate)lysine modification is found at lysine 265.

This sequence belongs to the class-III pyridoxal-phosphate-dependent aminotransferase family. HemL subfamily. Requires pyridoxal 5'-phosphate as cofactor.

The protein resides in the cytoplasm. It catalyses the reaction (S)-4-amino-5-oxopentanoate = 5-aminolevulinate. It functions in the pathway porphyrin-containing compound metabolism; protoporphyrin-IX biosynthesis; 5-aminolevulinate from L-glutamyl-tRNA(Glu): step 2/2. The chain is Glutamate-1-semialdehyde 2,1-aminomutase from Methanococcoides burtonii (strain DSM 6242 / NBRC 107633 / OCM 468 / ACE-M).